The primary structure comprises 75 residues: MKTAKEYSDTAKREVSVDVDALLAAINEISESEVHRSQNDSEHVSVDGREYHTWRELADAFELDIHDFSVSEVNR.

This is an uncharacterized protein from Escherichia coli O6:H1 (strain CFT073 / ATCC 700928 / UPEC).